Here is a 365-residue protein sequence, read N- to C-terminus: 2-aminoethylphosphonate--pyruvate transaminase (365 aa).

Lysine 194 carries the N6-(pyridoxal phosphate)lysine modification.

The protein belongs to the class-V pyridoxal-phosphate-dependent aminotransferase family. PhnW subfamily. Homodimer. Pyridoxal 5'-phosphate is required as a cofactor.

It catalyses the reaction (2-aminoethyl)phosphonate + pyruvate = phosphonoacetaldehyde + L-alanine. Functionally, involved in phosphonate degradation. This Bacillus cereus (strain ZK / E33L) protein is 2-aminoethylphosphonate--pyruvate transaminase.